We begin with the raw amino-acid sequence, 256 residues long: 2,3,4,5-tetrahydropyridine-2,6-dicarboxylate N-acetyltransferase (256 aa).

This sequence belongs to the transferase hexapeptide repeat family. DapH subfamily.

It carries out the reaction (S)-2,3,4,5-tetrahydrodipicolinate + acetyl-CoA + H2O = L-2-acetamido-6-oxoheptanedioate + CoA. The protein operates within amino-acid biosynthesis; L-lysine biosynthesis via DAP pathway; LL-2,6-diaminopimelate from (S)-tetrahydrodipicolinate (acetylase route): step 1/3. Catalyzes the transfer of an acetyl group from acetyl-CoA to tetrahydrodipicolinate. In Lactococcus lactis subsp. lactis (strain IL1403) (Streptococcus lactis), this protein is 2,3,4,5-tetrahydropyridine-2,6-dicarboxylate N-acetyltransferase.